A 298-amino-acid chain; its full sequence is ATP synthase gamma chain (298 aa).

The protein belongs to the ATPase gamma chain family. In terms of assembly, F-type ATPases have 2 components, CF(1) - the catalytic core - and CF(0) - the membrane proton channel. CF(1) has five subunits: alpha(3), beta(3), gamma(1), delta(1), epsilon(1). CF(0) has three main subunits: a, b and c.

The protein localises to the cell inner membrane. Its function is as follows. Produces ATP from ADP in the presence of a proton gradient across the membrane. The gamma chain is believed to be important in regulating ATPase activity and the flow of protons through the CF(0) complex. The polypeptide is ATP synthase gamma chain (Zymomonas mobilis subsp. mobilis (strain ATCC 31821 / ZM4 / CP4)).